The following is a 475-amino-acid chain: Sulfate adenylyltransferase subunit 1 (475 aa).

The tr-type G domain occupies 25 to 239; it reads KSLLRFLTCG…EVLETVEIQR (215 aa). The tract at residues 34 to 41 is G1; the sequence is GSVDDGKS. GTP is bound at residue 34–41; the sequence is GSVDDGKS. The tract at residues 92–96 is G2; the sequence is GITID. The tract at residues 113–116 is G3; the sequence is DTPG. GTP-binding positions include 113 to 117 and 168 to 171; these read DTPGH and NKMD. Residues 168–171 are G4; the sequence is NKMD. The interval 206 to 208 is G5; the sequence is SAL.

The protein belongs to the TRAFAC class translation factor GTPase superfamily. Classic translation factor GTPase family. CysN/NodQ subfamily. As to quaternary structure, heterodimer composed of CysD, the smaller subunit, and CysN.

It carries out the reaction sulfate + ATP + H(+) = adenosine 5'-phosphosulfate + diphosphate. It functions in the pathway sulfur metabolism; hydrogen sulfide biosynthesis; sulfite from sulfate: step 1/3. Functionally, with CysD forms the ATP sulfurylase (ATPS) that catalyzes the adenylation of sulfate producing adenosine 5'-phosphosulfate (APS) and diphosphate, the first enzymatic step in sulfur assimilation pathway. APS synthesis involves the formation of a high-energy phosphoric-sulfuric acid anhydride bond driven by GTP hydrolysis by CysN coupled to ATP hydrolysis by CysD. This chain is Sulfate adenylyltransferase subunit 1, found in Shigella flexneri.